Reading from the N-terminus, the 186-residue chain is M-phase phosphoprotein 6 homolog (186 aa).

Serine 2 is modified (N-acetylserine). Disordered regions lie at residues 22–47 and 95–186; these read KFGKTDDEESSNSNTPSNINSDVEPI and SNVG…NSKK. Low complexity predominate over residues 32 to 42; it reads SNSNTPSNINS. Residue serine 42 is modified to Phosphoserine. The span at 122 to 147 shows a compositional bias: basic and acidic residues; it reads SGSRKRKFDEGEQNEDEKRDAKDKEF. Residue serine 150 is modified to Phosphoserine. Residues 168-186 show a composition bias toward basic residues; the sequence is IKKKKTNHNGKNKNRNSKK.

Belongs to the MPP6 family. As to quaternary structure, associates with the RNA exosome complex.

It is found in the nucleus. Its function is as follows. RNA-binding protein that associates with the RNA exosome complex. Involved in surveillance of pre-rRNAs and pre-mRNAs, and the degradation of cryptic non-coding RNAs (ncRNA) derived from intergenic regions and the ribosomal DNA spacer heterochromatin. The sequence is that of M-phase phosphoprotein 6 homolog (MPP6) from Saccharomyces cerevisiae (strain ATCC 204508 / S288c) (Baker's yeast).